The chain runs to 224 residues: Deoxyribose-phosphate aldolase (224 aa).

D92 acts as the Proton donor/acceptor in catalysis. Catalysis depends on K154, which acts as the Schiff-base intermediate with acetaldehyde. K183 (proton donor/acceptor) is an active-site residue.

The protein belongs to the DeoC/FbaB aldolase family. DeoC type 1 subfamily.

It is found in the cytoplasm. The enzyme catalyses 2-deoxy-D-ribose 5-phosphate = D-glyceraldehyde 3-phosphate + acetaldehyde. The protein operates within carbohydrate degradation; 2-deoxy-D-ribose 1-phosphate degradation; D-glyceraldehyde 3-phosphate and acetaldehyde from 2-deoxy-alpha-D-ribose 1-phosphate: step 2/2. Catalyzes a reversible aldol reaction between acetaldehyde and D-glyceraldehyde 3-phosphate to generate 2-deoxy-D-ribose 5-phosphate. The protein is Deoxyribose-phosphate aldolase of Histophilus somni (strain 129Pt) (Haemophilus somnus).